Reading from the N-terminus, the 200-residue chain is dTTP/UTP pyrophosphatase (200 aa).

Asp-81 (proton acceptor) is an active-site residue.

Belongs to the Maf family. YhdE subfamily. The cofactor is a divalent metal cation.

It localises to the cytoplasm. It catalyses the reaction dTTP + H2O = dTMP + diphosphate + H(+). It carries out the reaction UTP + H2O = UMP + diphosphate + H(+). Nucleoside triphosphate pyrophosphatase that hydrolyzes dTTP and UTP. May have a dual role in cell division arrest and in preventing the incorporation of modified nucleotides into cellular nucleic acids. This Cupriavidus metallidurans (strain ATCC 43123 / DSM 2839 / NBRC 102507 / CH34) (Ralstonia metallidurans) protein is dTTP/UTP pyrophosphatase.